Reading from the N-terminus, the 649-residue chain is Glycerol-3-phosphate dehydrogenase, mitochondrial (649 aa).

69 to 97 is a binding site for FAD; sequence DVLIIGGGATGTGCALDAATRGLNVALVE.

It belongs to the FAD-dependent glycerol-3-phosphate dehydrogenase family. The cofactor is FAD.

The protein localises to the mitochondrion inner membrane. The protein resides in the mitochondrion intermembrane space. The catalysed reaction is a quinone + sn-glycerol 3-phosphate = dihydroxyacetone phosphate + a quinol. Its pathway is polyol metabolism; glycerol degradation via glycerol kinase pathway; glycerone phosphate from sn-glycerol 3-phosphate (anaerobic route): step 1/1. The chain is Glycerol-3-phosphate dehydrogenase, mitochondrial (GUT2) from Saccharomyces cerevisiae (strain ATCC 204508 / S288c) (Baker's yeast).